The sequence spans 230 residues: Carbohydrate deacetylase (230 aa).

Histidine 59 and histidine 123 together coordinate Mg(2+).

This sequence belongs to the YdjC deacetylase family. Homodimer. Requires Mg(2+) as cofactor.

Probably catalyzes the deacetylation of acetylated carbohydrates an important step in the degradation of oligosaccharides. This Oceanobacillus iheyensis (strain DSM 14371 / CIP 107618 / JCM 11309 / KCTC 3954 / HTE831) protein is Carbohydrate deacetylase.